Reading from the N-terminus, the 205-residue chain is dITP/XTP pyrophosphatase (205 aa).

16–21 provides a ligand contact to substrate; that stretch reads TGNPGK. Glu48 and Asp77 together coordinate Mg(2+). The active-site Proton acceptor is the Asp77. Substrate is bound by residues Ser78, 162–165, Lys185, and 190–191; these read FGYD and HR.

This sequence belongs to the HAM1 NTPase family. Homodimer. Mg(2+) is required as a cofactor.

The catalysed reaction is XTP + H2O = XMP + diphosphate + H(+). The enzyme catalyses dITP + H2O = dIMP + diphosphate + H(+). It catalyses the reaction ITP + H2O = IMP + diphosphate + H(+). Pyrophosphatase that catalyzes the hydrolysis of nucleoside triphosphates to their monophosphate derivatives, with a high preference for the non-canonical purine nucleotides XTP (xanthosine triphosphate), dITP (deoxyinosine triphosphate) and ITP. Seems to function as a house-cleaning enzyme that removes non-canonical purine nucleotides from the nucleotide pool, thus preventing their incorporation into DNA/RNA and avoiding chromosomal lesions. The protein is dITP/XTP pyrophosphatase of Erwinia tasmaniensis (strain DSM 17950 / CFBP 7177 / CIP 109463 / NCPPB 4357 / Et1/99).